The chain runs to 253 residues: Homeobox protein EMX2 (253 aa).

A DNA-binding region (homeobox) is located at residues 155-214 (PKRIRTAFSPSQLLRLEHAFEKNHYVVGAERKQLAHSLSLTETQVKVWFQNRRTKFKRQK). The segment at 213–253 (QKLEEEGSDSQQKKKGTHHINRWRIATKQASPEEIDVTSDD) is disordered. Basic residues predominate over residues 225–234 (KKKGTHHINR).

The protein belongs to the EMX homeobox family. In terms of assembly, interacts with translation initiation factor EIF4E.

Its subcellular location is the nucleus. It is found in the cell projection. The protein resides in the axon. Its function is as follows. Transcription factor, which in cooperation with EMX1, acts to generate the boundary between the roof and archipallium in the developing brain. May function in combination with OTX1/2 to specify cell fates in the developing central nervous system. In the inner ear, it controls the distribution of GPR156 at hair cell boundaries, and regulates the organization of stereociliary bundles in opposite orientations across the line of polarity reversal (LPR). The sequence is that of Homeobox protein EMX2 (EMX2) from Bos taurus (Bovine).